Reading from the N-terminus, the 376-residue chain is Queuine tRNA-ribosyltransferase (376 aa).

Residue Asp-93 is the Proton acceptor of the active site. Substrate contacts are provided by residues 93–97 (DSGGF), Asp-147, Gln-190, and Gly-217. Residues 248–254 (GVGKPDD) are RNA binding. Asp-267 acts as the Nucleophile in catalysis. Zn(2+) is bound by residues Cys-305, Cys-307, Cys-310, and His-336.

The protein belongs to the queuine tRNA-ribosyltransferase family. As to quaternary structure, homodimer. Within each dimer, one monomer is responsible for RNA recognition and catalysis, while the other monomer binds to the replacement base PreQ1. Zn(2+) serves as cofactor.

It carries out the reaction 7-aminomethyl-7-carbaguanine + guanosine(34) in tRNA = 7-aminomethyl-7-carbaguanosine(34) in tRNA + guanine. It functions in the pathway tRNA modification; tRNA-queuosine biosynthesis. In terms of biological role, catalyzes the base-exchange of a guanine (G) residue with the queuine precursor 7-aminomethyl-7-deazaguanine (PreQ1) at position 34 (anticodon wobble position) in tRNAs with GU(N) anticodons (tRNA-Asp, -Asn, -His and -Tyr). Catalysis occurs through a double-displacement mechanism. The nucleophile active site attacks the C1' of nucleotide 34 to detach the guanine base from the RNA, forming a covalent enzyme-RNA intermediate. The proton acceptor active site deprotonates the incoming PreQ1, allowing a nucleophilic attack on the C1' of the ribose to form the product. After dissociation, two additional enzymatic reactions on the tRNA convert PreQ1 to queuine (Q), resulting in the hypermodified nucleoside queuosine (7-(((4,5-cis-dihydroxy-2-cyclopenten-1-yl)amino)methyl)-7-deazaguanosine). The sequence is that of Queuine tRNA-ribosyltransferase from Cereibacter sphaeroides (strain ATCC 17029 / ATH 2.4.9) (Rhodobacter sphaeroides).